The following is a 315-amino-acid chain: Probable mannose-6-phosphate isomerase GmuF (315 aa).

Positions 95, 97, 115, and 172 each coordinate Zn(2+). Arginine 192 is an active-site residue.

The protein belongs to the mannose-6-phosphate isomerase type 1 family. Zn(2+) serves as cofactor.

It catalyses the reaction D-mannose 6-phosphate = D-fructose 6-phosphate. Its function is as follows. Seems to be involved in the degradation of glucomannan. The sequence is that of Probable mannose-6-phosphate isomerase GmuF (gmuF) from Bacillus subtilis (strain 168).